The following is a 221-amino-acid chain: MVSFTSIITAAVAATGALAAPATDVSLVARQNTPNGEGTHNGCFWSWWSDGGARATYTNGAGGSYSVSWGSGGNLVGGKGWNPGTARTITYSGTYNYNGNSYLAVYGWTRNPLVEYYVVENFGTYDPSSQSQNKGTVTSDGSSYKIAQSTRTNQPSIDGTRTFQQYWSVRQNKRSSGSVNMKTHFDAWASKGMNLGQHYYQIVATEGYFSTGNAQITVNCP.

An N-terminal signal peptide occupies residues 1-30; it reads MVSFTSIITAAVAATGALAAPATDVSLVAR. In terms of domain architecture, GH11 spans 31-219; that stretch reads QNTPNGEGTH…STGNAQITVN (189 aa). Glutamate 115 acts as the Nucleophile in catalysis. Residues 126–157 form a disordered region; sequence DPSSQSQNKGTVTSDGSSYKIAQSTRTNQPSI. The active-site Proton donor is the glutamate 206.

It belongs to the glycosyl hydrolase 11 (cellulase G) family. The N-terminus is blocked.

Its subcellular location is the secreted. It carries out the reaction Endohydrolysis of (1-&gt;4)-beta-D-xylosidic linkages in xylans.. It functions in the pathway glycan degradation; xylan degradation. Functionally, major xylan-degrading enzyme. Contributes to the hydrolysis of arabinoxylan, the major component of maize cell-walls. This Cochliobolus carbonum (Maize leaf spot fungus) protein is Endo-1,4-beta-xylanase I (XYL1).